The chain runs to 285 residues: HTH-type transcriptional regulator MurR (285 aa).

Residues 1-77 (MLYLTKISNA…MALIGEYSAS (77 aa)) form the HTH rpiR-type domain. A DNA-binding region (H-T-H motif) is located at residues 37–56 (SRQMAKQLGISQSSIVKFAQ). The 152-residue stretch at 128 to 279 (IIEVISKAPF…SLKMIQRSSE (152 aa)) folds into the SIS domain.

As to quaternary structure, homotetramer.

It functions in the pathway amino-sugar metabolism; N-acetylmuramate degradation [regulation]. Represses the expression of the murPQ operon involved in the uptake and degradation of N-acetylmuramic acid (MurNAc). Binds to two adjacent inverted repeats within the operator region. MurNAc 6-phosphate, the substrate of MurQ, is the specific inducer that weakens binding of MurR to the operator. This chain is HTH-type transcriptional regulator MurR, found in Shigella boydii serotype 18 (strain CDC 3083-94 / BS512).